The primary structure comprises 136 residues: Large ribosomal subunit protein uL22 (136 aa).

It belongs to the universal ribosomal protein uL22 family. As to quaternary structure, part of the 50S ribosomal subunit.

Its function is as follows. This protein binds specifically to 23S rRNA; its binding is stimulated by other ribosomal proteins, e.g. L4, L17, and L20. It is important during the early stages of 50S assembly. It makes multiple contacts with different domains of the 23S rRNA in the assembled 50S subunit and ribosome. Functionally, the globular domain of the protein is located near the polypeptide exit tunnel on the outside of the subunit, while an extended beta-hairpin is found that lines the wall of the exit tunnel in the center of the 70S ribosome. The protein is Large ribosomal subunit protein uL22 of Bacteroides fragilis (strain ATCC 25285 / DSM 2151 / CCUG 4856 / JCM 11019 / LMG 10263 / NCTC 9343 / Onslow / VPI 2553 / EN-2).